A 929-amino-acid polypeptide reads, in one-letter code: Valine--tRNA ligase (929 aa).

Residues 59 to 69 carry the 'HIGH' region motif; the sequence is PNVTGSLHMGH. The 'KMSKS' region motif lies at 557-561; the sequence is KMSKS. Lys560 is a binding site for ATP. Residues 862–929 adopt a coiled-coil conformation; that stretch reads LVDLDALRGR…LARQRLSDLG (68 aa).

The protein belongs to the class-I aminoacyl-tRNA synthetase family. ValS type 1 subfamily. Monomer.

The protein localises to the cytoplasm. It catalyses the reaction tRNA(Val) + L-valine + ATP = L-valyl-tRNA(Val) + AMP + diphosphate. In terms of biological role, catalyzes the attachment of valine to tRNA(Val). As ValRS can inadvertently accommodate and process structurally similar amino acids such as threonine, to avoid such errors, it has a 'posttransfer' editing activity that hydrolyzes mischarged Thr-tRNA(Val) in a tRNA-dependent manner. In Prochlorococcus marinus (strain MIT 9313), this protein is Valine--tRNA ligase.